We begin with the raw amino-acid sequence, 149 residues long: Protegrin-1 (149 aa).

The N-terminal stretch at 1 to 29 (METQRASLCLGRWSLWLLLLALVVPSASA) is a signal peptide. The propeptide occupies 30 to 130 (QALSYREAVL…DITCNEVQGV (101 aa)). A disordered region spans residues 61 to 80 (DQPPKADEDPGTPKPVSFTV). Intrachain disulfides connect Cys-85-Cys-96, Cys-107-Cys-124, Cys-136-Cys-145, and Cys-138-Cys-143. Arg-148 carries the arginine amide modification.

Belongs to the cathelicidin family.

It is found in the secreted. Its function is as follows. Microbicidal activity. Active against E.coli, Listeria monocytogenes and C.albicans, in vitro. The sequence is that of Protegrin-1 (NPG1) from Sus scrofa (Pig).